Reading from the N-terminus, the 166-residue chain is UPF0254 protein Mevan_0254 (166 aa).

Belongs to the UPF0254 family.

The chain is UPF0254 protein Mevan_0254 from Methanococcus vannielii (strain ATCC 35089 / DSM 1224 / JCM 13029 / OCM 148 / SB).